The sequence spans 282 residues: 4-hydroxybenzoate octaprenyltransferase (282 aa).

Transmembrane regions (helical) follow at residues 17–37 (IGIL…NQGF), 40–60 (IDLL…GCVI), 90–110 (AFIL…KLPI), 113–133 (FYFA…KRFF), 135–155 (APQL…FIAS), 163–183 (FIVL…MYAM), 207–227 (LIIA…AINK), 231–251 (CFFY…LKLI), and 262–282 (AFLV…LALI).

This sequence belongs to the UbiA prenyltransferase family. Requires Mg(2+) as cofactor.

The protein localises to the cell inner membrane. It catalyses the reaction all-trans-octaprenyl diphosphate + 4-hydroxybenzoate = 4-hydroxy-3-(all-trans-octaprenyl)benzoate + diphosphate. It participates in cofactor biosynthesis; ubiquinone biosynthesis. Functionally, catalyzes the prenylation of para-hydroxybenzoate (PHB) with an all-trans polyprenyl group. Mediates the second step in the final reaction sequence of ubiquinone-8 (UQ-8) biosynthesis, which is the condensation of the polyisoprenoid side chain with PHB, generating the first membrane-bound Q intermediate 3-octaprenyl-4-hydroxybenzoate. The chain is 4-hydroxybenzoate octaprenyltransferase from Legionella pneumophila (strain Lens).